The sequence spans 477 residues: Serine/threonine-protein kinase pakC (477 aa).

Positions 13-108 (SPDKEGELKK…WMKAVEKGSE (96 aa)) constitute a PH domain. Residues 112-125 (VSQPFNLKHEVHVD) enclose the CRIB domain. The Protein kinase domain maps to 204–458 (YKNMTKIGEG…ATDLLKHPFM (255 aa)). ATP contacts are provided by residues 210–218 (IGEGAAGEV) and Lys-233. The active-site Proton acceptor is the Asp-326.

This sequence belongs to the protein kinase superfamily. STE Ser/Thr protein kinase family. STE20 subfamily. In terms of assembly, interacts with GTP-bound racB. It depends on Mg(2+) as a cofactor.

It is found in the cytoplasm. It localises to the membrane. It carries out the reaction L-seryl-[protein] + ATP = O-phospho-L-seryl-[protein] + ADP + H(+). The enzyme catalyses L-threonyl-[protein] + ATP = O-phospho-L-threonyl-[protein] + ADP + H(+). Its activity is regulated as follows. Kinase activity is rapidly and transiently increased in response to chemoattractant stimulation. Functionally, has role in the regulation of chemotaxis. The sequence is that of Serine/threonine-protein kinase pakC (pakC) from Dictyostelium discoideum (Social amoeba).